We begin with the raw amino-acid sequence, 93 residues long: Peptide YY-like (93 aa).

The signal sequence occupies residues 1–27; sequence MVSPRVRLAALALSVCAILCLGMHASA. At Tyr-63 the chain carries Tyrosine amide. Positions 65 to 93 are cleaved as a propeptide — C-terminal extension; the sequence is KRALTPENWIYRDPAEERVTYGLDDYAMW.

It belongs to the NPY family. Gut and medial reticulospinal neuron system in the brainstem.

The protein localises to the secreted. In terms of biological role, gastrointestinal hormone and neuropeptide. The polypeptide is Peptide YY-like (pyy) (Lampetra fluviatilis (European river lamprey)).